Reading from the N-terminus, the 1110-residue chain is METNLLPGGPSYGLLDESGVQMETTVCRPVLSPTHINGTASETFTVLQQKMRIVEEQTSSLRDDLIMLGYGDRRGQLETPNYLEDPASQKAISPIPNEVICPESPGNLWRNYEFLVNRMCYLENLIQSLKMNIFHLQTEKESNPQKTAFLNDQLNIIQGEHSKGLKLLQLEVMNLRQQLKVVKEEEDRAQDEMQRLTATLEIATETKKNAAVIEEELKTTKRKMNLKIQELRRQLAQEKLVRESLETSASSMLLKVQEMGSVVEAERQQVHALQEKCTALHSSMKTTQDLLAQEQRKNEDLGMTISQLKSDLNSRDNLICKLVEENKATQISLKKEHEENIYLKSEILSLQDVSGKAQVLNDQLSKKCSELTSMLQVVKMENSRIIAEHQAILKVEQKMITETFQEQNLLLDAAHASITGELQAVQNEKAQLQIHLDHLILEHNQCLQKSQEAEKRTVVQKELLESTIARLQGELKASLQEKKSLLEKNEWFQREVNKTEKEVAKEKCNLEKELAESKEDINVLNQNLQTLMEENKHLTNKMASLEHHKATSDYQGKVEKALEKITDSKNMLAYEKGKLQTKVKQLEAQLHTFAETMLQKDHLHKLNKALEVKYTQANSELSASKAYLEQTEAHLKEMKSILGKNEEELAQAVKCRDAALKESQKLKGDLKALEDRESKKVGNFQKQLAEAKEDNCKVTIMLENVLASHSKMQGALEKVQIELGRRDSEIAGLKKERSLNQQRVQKLEAEVDQWQARMLIVEAQHGSEIEPLQKSLDITREDNRKLAMSLEQALQTNGHLQSKLDHLQEKLESKERERQSLEAFKEQVAEESKVEAELHAERIEALRKQFQTERETAKKASQREVSELKKALDEANFRSVEVSRANRELRHKATELEKVVNSNKEKLKNQRAQIKLHLSAKANNAQNMERMKQIEMELRQMEIIKDQYQKKNYEQSLSIQRFVSEMNTLQKEMELLTKSQYETSARNKQQELRLVAERKMRLELENRCKELEETIRHLKRCKEATENKLKEASVESEQITANLEEAHRWFKCRFDGLQLELTKNRLQRLPREDRWLEENQDMMHNVATSQSVLHRWETKQKYHSDTERKK.

4 coiled-coil regions span residues 122 to 250 (LENL…TSAS), 288 to 313 (QDLLAQEQRKNEDLGMTISQLKSDLN), 413 to 695 (AAHA…KEDN), and 728 to 1048 (SEIA…EAHR).

In Mus musculus (Mouse), this protein is Coiled-coil domain-containing protein 150 (Ccdc150).